We begin with the raw amino-acid sequence, 26 residues long: uncharacterized protein (26 aa).

It localises to the plastid. It is found in the chloroplast. This is an uncharacterized protein from Trieres chinensis (Marine centric diatom).